Consider the following 727-residue polypeptide: Capsid protein VP1 (727 aa).

Positions 1-10 are enriched in basic residues; the sequence is MAPPAKRARR. Disordered stretches follow at residues 1–38, 95–120, and 141–184; these read MAPPAKRARRGLVPPGYKYLGPGNSLDQGEPTNPSDAA, VLTDTPDHPSTSRPTKPTKRSKPPPH, and LAPM…VGIS. The short motif at 4–13 is the Nuclear localization signal element; that stretch reads PAKRARRGLV. The tract at residues 19 to 64 is phospholipase A2-like; that stretch reads YLGPGNSLDQGEPTNPSDAAAKEHDEAYAAYLRSGKNPYLYFSPAD. The segment covering 25–35 has biased composition (polar residues); the sequence is SLDQGEPTNPS. Residues 166–183 are compositionally biased toward gly residues; it reads SGNGSGGGGGGGSGGVGI. A Mg(2+)-binding site is contributed by asparagine 323. Cysteine 633 and cysteine 637 form a disulfide bridge.

The protein belongs to the parvoviridae capsid protein family. Interacts with host TFRC.

It localises to the virion. The protein localises to the host nucleus. Its function is as follows. Capsid protein self-assembles to form an icosahedral capsid with a T=1 symmetry, about 22 nm in diameter, and consisting of 60 copies of two size variants of the capsid proteins, VP1 and VP2, which differ by the presence of an N-terminal extension in the minor protein VP1. The capsid encapsulates the genomic ssDNA. Capsid proteins are responsible for the attachment to host cell receptors. This attachment induces virion internalization predominantly through clathrin-dependent endocytosis. Binding to the host receptors also induces capsid rearrangements leading to surface exposure of VP1 N-terminus, specifically its phospholipase A2-like region and putative nuclear localization signal(s). VP1 N-terminus might serve as a lipolytic enzyme to breach the endosomal membrane during entry into host cell and might contribute to virus transport to the nucleus. The protein is Capsid protein VP1 of Feline panleukopenia virus (strain 193) (FPV).